The sequence spans 200 residues: 3-isopropylmalate dehydratase small subunit (200 aa).

The protein belongs to the LeuD family. LeuD type 1 subfamily. In terms of assembly, heterodimer of LeuC and LeuD.

It catalyses the reaction (2R,3S)-3-isopropylmalate = (2S)-2-isopropylmalate. It functions in the pathway amino-acid biosynthesis; L-leucine biosynthesis; L-leucine from 3-methyl-2-oxobutanoate: step 2/4. Its function is as follows. Catalyzes the isomerization between 2-isopropylmalate and 3-isopropylmalate, via the formation of 2-isopropylmaleate. The polypeptide is 3-isopropylmalate dehydratase small subunit (Campylobacter jejuni subsp. jejuni serotype O:6 (strain 81116 / NCTC 11828)).